The chain runs to 451 residues: tRNA modification GTPase MnmE (451 aa).

Residues R28, E85, and K124 each coordinate (6S)-5-formyl-5,6,7,8-tetrahydrofolate. The region spanning 220-373 (GLYTVLVGPP…LKTRLRTLLL (154 aa)) is the TrmE-type G domain. Position 230 (N230) interacts with K(+). Residues 230-235 (NVGKSS), 249-255 (TDVPGTT), and 274-277 (DTAG) each bind GTP. Residue S234 coordinates Mg(2+). The K(+) site is built by T249, V251, and T254. A Mg(2+)-binding site is contributed by T255. (6S)-5-formyl-5,6,7,8-tetrahydrofolate is bound at residue K451.

This sequence belongs to the TRAFAC class TrmE-Era-EngA-EngB-Septin-like GTPase superfamily. TrmE GTPase family. Homodimer. Heterotetramer of two MnmE and two MnmG subunits. K(+) is required as a cofactor.

It localises to the cytoplasm. Exhibits a very high intrinsic GTPase hydrolysis rate. Involved in the addition of a carboxymethylaminomethyl (cmnm) group at the wobble position (U34) of certain tRNAs, forming tRNA-cmnm(5)s(2)U34. In Xylella fastidiosa (strain Temecula1 / ATCC 700964), this protein is tRNA modification GTPase MnmE.